We begin with the raw amino-acid sequence, 190 residues long: METTCGLPVLPQKISVNFMLRETVDDLGLSKSVTFFLLNSPIMLRLFQRTQFQGSKTCPRVFSKSFHSLPFLRQELILKVEPLKRDNESEDVKRRRLVYQSRKRGILETDLLLSRFAKRYLPTMSVEEMEEYDDLLNELDWDIYYWAVKNYEVTPLPEKWKDSKILAKLQEMSANNEGEILRMPNLDDSP.

This sequence belongs to the SDHAF2 family. Interacts with the flavoprotein subunit within the SDH catalytic dimer.

The protein resides in the mitochondrion matrix. In terms of biological role, plays an essential role in the assembly of succinate dehydrogenase (SDH), an enzyme complex (also referred to as respiratory complex II) that is a component of both the tricarboxylic acid (TCA) cycle and the mitochondrial electron transport chain, and which couples the oxidation of succinate to fumarate with the reduction of ubiquinone (coenzyme Q) to ubiquinol. Required for flavinylation (covalent attachment of FAD) of the flavoprotein subunit of the SDH catalytic dimer. The polypeptide is Succinate dehydrogenase assembly factor 2, mitochondrial (Komagataella phaffii (strain GS115 / ATCC 20864) (Yeast)).